Consider the following 454-residue polypeptide: Asparagine--tRNA ligase (454 aa).

Belongs to the class-II aminoacyl-tRNA synthetase family. Homodimer.

It localises to the cytoplasm. It catalyses the reaction tRNA(Asn) + L-asparagine + ATP = L-asparaginyl-tRNA(Asn) + AMP + diphosphate + H(+). In Ureaplasma parvum serovar 3 (strain ATCC 27815 / 27 / NCTC 11736), this protein is Asparagine--tRNA ligase.